Here is a 1704-residue protein sequence, read N- to C-terminus: Phospholipid-transporting ATPase ABCA3 (1704 aa).

An N-linked (GlcNAc...) asparagine glycan is attached at Asn14. The helical transmembrane segment at 22–42 threads the bilayer; sequence VLVTVLELFLPLLFSGILIWL. N-linked (GlcNAc...) asparagine glycosylation is found at Asn53, Asn124, Asn140, and Asn228. 5 helical membrane-spanning segments follow: residues 251 to 271, 307 to 327, 344 to 364, 373 to 393, and 405 to 425; these read ISDP…MLSF, AWFL…TLLF, SLVL…SFMV, MAAT…FFVA, and LLSC…IGKF. One can recognise an ABC transporter 1 domain in the interval 530 to 763; that stretch reads IKIKHLSKVF…YGAGYHMTLV (234 aa). 566-573 contacts ATP; that stretch reads GHNGAGKT. N-linked (GlcNAc...) asparagine glycans are attached at residues Asn620 and Asn945. The next 6 helical transmembrane spans lie at 1100 to 1120, 1144 to 1164, 1183 to 1203, 1213 to 1233, 1245 to 1265, and 1310 to 1330; these read IALN…ILAV, SALL…LVVF, LLLM…SFFF, LTIF…IMRI, LDHV…SNFY, and MAAS…NLLW. An N-linked (GlcNAc...) asparagine glycan is attached at Asn1350. One can recognise an ABC transporter 2 domain in the interval 1381–1614; that stretch reads LIINELSKVY…FGSGYSLQAK (234 aa). 1416–1423 contacts ATP; it reads GFNGAGKT.

As to quaternary structure, homooligomer; disulfide-linked. In terms of processing, N-glycosylated. Localization at intracellular vesicles is accompanied by processing of oligosaccharide from high mannose type to complex type. N-linked glycosylation at Asn-124 and Asn-140 is required for stability and efficient anterograde trafficking and prevents from proteasomal degradation. Proteolytically cleaved by CTSL and to a lower extent by CTSB within multivesicular bodies (MVB) and lamellar bodies (LB) leading to a mature form of 150 kDa. Highly expressed in lung, moderately expressed in stomach, intestine, and kidney and weakly expressed in thyroid, brain, liver, spleen, heart, testis, and thymus.

It is found in the endosome. Its subcellular location is the multivesicular body membrane. The protein resides in the cytoplasmic vesicle membrane. The protein localises to the late endosome membrane. It localises to the lysosome membrane. The catalysed reaction is ATP + H2O + xenobioticSide 1 = ADP + phosphate + xenobioticSide 2.. It carries out the reaction a 1,2-diacyl-sn-glycero-3-phosphocholine(in) + ATP + H2O = a 1,2-diacyl-sn-glycero-3-phosphocholine(out) + ADP + phosphate + H(+). The enzyme catalyses ATP + H2O + phospholipidSide 1 = ADP + phosphate + phospholipidSide 2.. It catalyses the reaction 1,2-dihexadecanoyl-sn-glycero-3-phosphocholine(in) + ATP + H2O = 1,2-dihexadecanoyl-sn-glycero-3-phosphocholine(out) + ADP + phosphate + H(+). The catalysed reaction is cholesterol(in) + ATP + H2O = cholesterol(out) + ADP + phosphate + H(+). It carries out the reaction a 1,2-diacyl-sn-glycero-3-phospho-(1'-sn-glycerol)(in) + ATP + H2O = a 1,2-diacyl-sn-glycero-3-phospho-(1'-sn-glycerol)(out) + ADP + phosphate + H(+). Its function is as follows. Catalyzes the ATP-dependent transport of phospholipids such as phosphatidylcholine and phosphoglycerol from the cytoplasm into the lumen side of lamellar bodies, in turn participates in the lamellar bodies biogenesis and homeostasis of pulmonary surfactant. Transports preferentially phosphatidylcholine containing short acyl chains. In addition plays a role as an efflux transporter of miltefosine across macrophage membranes and free cholesterol (FC) through intralumenal vesicles by removing FC from the cell as a component of surfactant and protects cells from free cholesterol toxicity. This is Phospholipid-transporting ATPase ABCA3 from Rattus norvegicus (Rat).